The chain runs to 88 residues: UPF0213 protein SAG0778 (88 aa).

One can recognise a GIY-YIG domain in the interval Val4 to Tyr80.

Belongs to the UPF0213 family.

This Streptococcus agalactiae serotype V (strain ATCC BAA-611 / 2603 V/R) protein is UPF0213 protein SAG0778.